The primary structure comprises 386 residues: V-type proton ATPase subunit B 2 (386 aa).

Belongs to the ATPase alpha/beta chains family. As to quaternary structure, V-ATPase is a heteromultimeric enzyme composed of a peripheral catalytic V1 complex (main components: subunits A, B, C, D, E, and F) attached to an integral membrane V0 proton pore complex (main component: the proteolipid protein).

Non-catalytic subunit of the peripheral V1 complex of vacuolar ATPase. V-ATPase is responsible for acidifying a variety of intracellular compartments in eukaryotic cells. This Gossypium hirsutum (Upland cotton) protein is V-type proton ATPase subunit B 2.